The following is a 298-amino-acid chain: Acetylglutamate kinase (298 aa).

Substrate-binding positions include 69-70 (GG), arginine 91, and asparagine 196.

It belongs to the acetylglutamate kinase family. ArgB subfamily.

It localises to the cytoplasm. It catalyses the reaction N-acetyl-L-glutamate + ATP = N-acetyl-L-glutamyl 5-phosphate + ADP. The protein operates within amino-acid biosynthesis; L-arginine biosynthesis; N(2)-acetyl-L-ornithine from L-glutamate: step 2/4. Catalyzes the ATP-dependent phosphorylation of N-acetyl-L-glutamate. This chain is Acetylglutamate kinase, found in Bradyrhizobium sp. (strain ORS 278).